The chain runs to 249 residues: Ribosomal RNA small subunit methyltransferase G (249 aa).

S-adenosyl-L-methionine-binding positions include glycine 88, phenylalanine 93, 111–113, 139–140, and arginine 158; these read DAT and AE. Cysteine 164 and cysteine 249 form a disulfide bridge. The segment at 245–246 is RNA binding; it reads RH.

This sequence belongs to the methyltransferase superfamily. RNA methyltransferase RsmG family.

Its subcellular location is the cytoplasm. The enzyme catalyses guanosine(527) in 16S rRNA + S-adenosyl-L-methionine = N(7)-methylguanosine(527) in 16S rRNA + S-adenosyl-L-homocysteine. Its function is as follows. Specifically methylates the N7 position of guanine in position 527 of 16S rRNA. Shows a marked preference for deproteinized 16S rRNA as substrate and is completely inactive with native 30S subunits as substrate. The protein is Ribosomal RNA small subunit methyltransferase G of Thermus thermophilus (strain ATCC 27634 / DSM 579 / HB8).